Here is a 142-residue protein sequence, read N- to C-terminus: Nitrogen fixation protein NifU 2 (142 aa).

The disordered stretch occupies residues 1 to 36 (MKDLFDESLTLDTGSAAPGTAPGRPRRRQPAGGKAP). A compositionally biased stretch (low complexity) spans 14–23 (GSAAPGTAPG).

It belongs to the NifU family.

In terms of biological role, may be involved in the formation or repair of [Fe-S] clusters present in iron-sulfur proteins. This Rhodobacter capsulatus (Rhodopseudomonas capsulata) protein is Nitrogen fixation protein NifU 2 (nifU2).